A 279-amino-acid chain; its full sequence is uncharacterized protein (279 aa).

It belongs to the PhzF family.

This is an uncharacterized protein from Vibrio cholerae serotype O1 (strain ATCC 39315 / El Tor Inaba N16961).